Reading from the N-terminus, the 569-residue chain is 2-succinyl-5-enolpyruvyl-6-hydroxy-3-cyclohexene-1-carboxylate synthase (569 aa).

This sequence belongs to the TPP enzyme family. MenD subfamily. In terms of assembly, homodimer. The cofactor is Mg(2+). Mn(2+) is required as a cofactor. It depends on thiamine diphosphate as a cofactor.

The catalysed reaction is isochorismate + 2-oxoglutarate + H(+) = 5-enolpyruvoyl-6-hydroxy-2-succinyl-cyclohex-3-ene-1-carboxylate + CO2. It participates in quinol/quinone metabolism; 1,4-dihydroxy-2-naphthoate biosynthesis; 1,4-dihydroxy-2-naphthoate from chorismate: step 2/7. It functions in the pathway cofactor biosynthesis; phylloquinone biosynthesis. In terms of biological role, catalyzes the thiamine diphosphate-dependent decarboxylation of 2-oxoglutarate and the subsequent addition of the resulting succinic semialdehyde-thiamine pyrophosphate anion to isochorismate to yield 2-succinyl-5-enolpyruvyl-6-hydroxy-3-cyclohexene-1-carboxylate (SEPHCHC). The polypeptide is 2-succinyl-5-enolpyruvyl-6-hydroxy-3-cyclohexene-1-carboxylate synthase (Microcystis aeruginosa (strain NIES-843 / IAM M-2473)).